We begin with the raw amino-acid sequence, 131 residues long: Large ribosomal subunit protein eL32 (131 aa).

It belongs to the eukaryotic ribosomal protein eL32 family.

In Candida glabrata (strain ATCC 2001 / BCRC 20586 / JCM 3761 / NBRC 0622 / NRRL Y-65 / CBS 138) (Yeast), this protein is Large ribosomal subunit protein eL32 (RPL32).